The following is a 785-amino-acid chain: Mitochondrial intermediate peptidase (785 aa).

The N-terminal 43 residues, 1–43, are a transit peptide targeting the mitochondrion; the sequence is MLTRPAQNALLKSMQPLFRFRGCLLAKSTSTPRRDISTSSRKL. Zn(2+) is bound at residue histidine 567. Glutamate 568 is a catalytic residue. Residues histidine 571 and histidine 574 each contribute to the Zn(2+) site.

Belongs to the peptidase M3 family. Zn(2+) serves as cofactor.

It is found in the mitochondrion matrix. It catalyses the reaction Release of an N-terminal octapeptide as second stage of processing of some proteins imported into the mitochondrion.. Functionally, cleaves proteins, imported into the mitochondrion, to their mature size. While most mitochondrial precursor proteins are processed to the mature form in one step by mitochondrial processing peptidase (MPP), the sequential cleavage by MIP of an octapeptide after initial processing by MPP is a required step for a subgroup of nuclear-encoded precursor proteins destined for the matrix or the inner membrane. The chain is Mitochondrial intermediate peptidase (OCT1) from Pleurotus djamor (Pink oyster mushroom).